Consider the following 213-residue polypeptide: MADTSGPQSSHISSSAGEKGSGCAVQDLLYWRDVKQSGMVFGGTMVLLLSLAAFSIISVISYLVLSLLAVTISYRVYKSVLQAVQKTDEGHPFKPLLEKDIALSSDAFQKALSTSLAHVNHALKYIVRLFLVEDLVDSLKLALLMWLMTYVGAVFNGITLLILGVLLAFTAPIVYEKYKVQIDHYVSLVHSHVKSITEKIQAKLPGALKKKSE.

The span at 1-16 (MADTSGPQSSHISSSA) shows a compositional bias: polar residues. The tract at residues 1 to 20 (MADTSGPQSSHISSSAGEKG) is disordered. Residues 25-213 (VQDLLYWRDV…LPGALKKKSE (189 aa)) form the Reticulon domain. 2 helical membrane passes run 45–65 (MVLLLSLAAFSIISVISYLVL) and 154–174 (VFNGITLLILGVLLAFTAPIV).

Homodimer.

The protein resides in the endoplasmic reticulum membrane. It localises to the golgi apparatus membrane. In terms of biological role, may be involved in membrane trafficking in the early secretory pathway. The protein is Reticulon-3 (rtn3) of Xenopus tropicalis (Western clawed frog).